We begin with the raw amino-acid sequence, 43 residues long: Protein PsbN (43 aa).

Residues 5-27 form a helical membrane-spanning segment; that stretch reads TLVAISISGSLVSFTGYALYTAF.

The protein belongs to the PsbN family.

It is found in the plastid. It localises to the chloroplast thylakoid membrane. Functionally, may play a role in photosystem I and II biogenesis. The sequence is that of Protein PsbN from Lactoris fernandeziana.